Here is a 443-residue protein sequence, read N- to C-terminus: Methyl-coenzyme M reductase II subunit beta (443 aa).

Position 367 (tyrosine 367) interacts with coenzyme M. Residue glycine 369 participates in coenzyme B binding.

The protein belongs to the methyl-coenzyme M reductase beta subunit family. In terms of assembly, MCR is a hexamer of two alpha, two beta, and two gamma chains, forming a dimer of heterotrimers. The cofactor is coenzyme F430.

It catalyses the reaction coenzyme B + methyl-coenzyme M = methane + coenzyme M-coenzyme B heterodisulfide. Its pathway is one-carbon metabolism; methyl-coenzyme M reduction; methane from methyl-coenzyme M: step 1/1. Functionally, component of the methyl-coenzyme M reductase (MCR) I that catalyzes the reductive cleavage of methyl-coenzyme M (CoM-S-CH3 or 2-(methylthio)ethanesulfonate) using coenzyme B (CoB or 7-mercaptoheptanoylthreonine phosphate) as reductant which results in the production of methane and the mixed heterodisulfide of CoB and CoM (CoM-S-S-CoB). This is the final step in methanogenesis. This Methanothermobacter marburgensis (strain ATCC BAA-927 / DSM 2133 / JCM 14651 / NBRC 100331 / OCM 82 / Marburg) (Methanobacterium thermoautotrophicum) protein is Methyl-coenzyme M reductase II subunit beta.